A 435-amino-acid chain; its full sequence is Ribosomal protein uS12 methylthiotransferase RimO (435 aa).

The MTTase N-terminal domain maps to 3–113 (HKVGFVSLGC…VVNAVHQYLP (111 aa)). Residues Cys-12, Cys-48, Cys-77, Cys-144, Cys-148, and Cys-151 each coordinate [4Fe-4S] cluster. Residues 130–367 (LTPRHYAYLK…MQVQAEISRN (238 aa)) enclose the Radical SAM core domain. Residues 370–435 (KNKIGSTQTV…DDYDLYASLV (66 aa)) enclose the TRAM domain.

The protein belongs to the methylthiotransferase family. RimO subfamily. The cofactor is [4Fe-4S] cluster.

Its subcellular location is the cytoplasm. It carries out the reaction L-aspartate(89)-[ribosomal protein uS12]-hydrogen + (sulfur carrier)-SH + AH2 + 2 S-adenosyl-L-methionine = 3-methylsulfanyl-L-aspartate(89)-[ribosomal protein uS12]-hydrogen + (sulfur carrier)-H + 5'-deoxyadenosine + L-methionine + A + S-adenosyl-L-homocysteine + 2 H(+). Its function is as follows. Catalyzes the methylthiolation of an aspartic acid residue of ribosomal protein uS12. The sequence is that of Ribosomal protein uS12 methylthiotransferase RimO from Legionella pneumophila subsp. pneumophila (strain Philadelphia 1 / ATCC 33152 / DSM 7513).